We begin with the raw amino-acid sequence, 223 residues long: Uridylate kinase (223 aa).

Residue 9–10 (GS) coordinates ATP. Gly-42 serves as a coordination point for UMP. The ATP site is built by Gly-43 and Arg-47. Residues Asp-64 and 112-118 (VSPGQTT) contribute to the UMP site. Positions 138, 144, and 147 each coordinate ATP.

Belongs to the UMP kinase family. As to quaternary structure, homohexamer.

The protein resides in the cytoplasm. The enzyme catalyses UMP + ATP = UDP + ADP. It functions in the pathway pyrimidine metabolism; CTP biosynthesis via de novo pathway; UDP from UMP (UMPK route): step 1/1. With respect to regulation, inhibited by UTP. Catalyzes the reversible phosphorylation of UMP to UDP. The protein is Uridylate kinase of Methanothrix thermoacetophila (strain DSM 6194 / JCM 14653 / NBRC 101360 / PT) (Methanosaeta thermophila).